The chain runs to 441 residues: Protein kinase C and casein kinase substrate in neurons protein 1 (441 aa).

2 positions are modified to phosphoserine: serine 2 and serine 76. Positions glutamate 10–aspartate 280 constitute an F-BAR domain. Positions lysine 23–isoleucine 272 form a coiled coil. Residue threonine 181 is modified to Phosphothreonine. The interval proline 297 to aspartate 380 is disordered. Basic and acidic residues predominate over residues alanine 311–glutamate 321. Residues threonine 324–threonine 355 show a composition bias toward polar residues. Phosphoserine occurs at positions 343, 345, 346, 358, and 362. An SH3 domain is found at alanine 382–isoleucine 441. At tyrosine 391 the chain carries Phosphotyrosine. Phosphoserine is present on residues serine 402 and serine 427.

The protein belongs to the PACSIN family. In terms of assembly, homodimer. May form heterooligomers with other PACSINs. Interacts with both COBL and DBNL. Identified in a complex composed of COBL, PACSIN1 and WASL. Interacts with EHD3. Interacts (via SH3 domain) with SYNJ1 and WASL. Interacts (via SH3 domain) with DNM1; the interaction is reduced by DNM1 phosphorylation. Interacts with DNM2 and DNM3. Interacts with MAPT. Interacts with EHD1. Interacts with TRPV4. Phosphorylated by casein kinase 2 (CK2) and protein kinase C (PKC). Highly expressed in brain. Detected in hippocampus and dorsal root ganglion neurons. Detected in rod photoreceptor terminals in the outer plexiform layer of the retina (at protein level). In CNS neurons, high levels in the pyramidal cells of the hippocampus, Purkinje cells of the cerebellum and large neurons of the cortex and brain stem.

The protein resides in the cytoplasm. Its subcellular location is the cell projection. It is found in the synapse. The protein localises to the synaptosome. It localises to the ruffle membrane. The protein resides in the membrane. Its subcellular location is the cytoplasmic vesicle membrane. It is found in the cytosol. The protein localises to the cell membrane. In terms of biological role, binds to membranes via its F-BAR domain and mediates membrane tubulation. Plays a role in the reorganization of the microtubule cytoskeleton via its interaction with MAPT; this decreases microtubule stability and inhibits MAPT-induced microtubule polymerization. Plays a role in cellular transport processes by recruiting DNM1, DNM2 and DNM3 to membranes. Plays a role in the reorganization of the actin cytoskeleton and in neuron morphogenesis via its interaction with COBL and WASL, and by recruiting COBL to the cell cortex. Plays a role in the regulation of neurite formation, neurite branching and the regulation of neurite length. Required for normal synaptic vesicle endocytosis; this process retrieves previously released neurotransmitters to accommodate multiple cycles of neurotransmission. Required for normal excitatory and inhibitory synaptic transmission. This Mus musculus (Mouse) protein is Protein kinase C and casein kinase substrate in neurons protein 1 (Pacsin1).